The following is a 1104-amino-acid chain: A disintegrin and metalloproteinase with thrombospondin motifs 10 (1104 aa).

An N-terminal signal peptide occupies residues 1-25 (MASACQILRWALALGLGLTFKVTHA). Residues 26-233 (FRSQDELLSS…SERGQLGLKR (208 aa)) constitute a propeptide that is removed on maturation. N-linked (GlcNAc...) asparagine glycosylation is found at Asn90 and Asn222. The region spanning 239–457 (RYVETLVVAD…GLGLCLNNRP (219 aa)) is the Peptidase M12B domain. Cystine bridges form between Cys315/Cys376, Cys351/Cys358, Cys370/Cys452, Cys409/Cys436, Cys479/Cys501, Cys490/Cys508, Cys496/Cys531, Cys521/Cys536, Cys559/Cys596, Cys563/Cys601, and Cys574/Cys586. A Zn(2+)-binding site is contributed by His392. Residue Glu393 is part of the active site. Zn(2+) is bound by residues His396 and His402. Residues 460-546 (QDFVYPTVAP…VPFGSRPEGV (87 aa)) enclose the Disintegrin domain. A TSP type-1 1 domain is found at 547-602 (DGAWGPWTPWGDCSRSCGGGVSSSSRHCDSPRPTIGGKYCLGERRRHRSCNTNDCP). Residues 706–818 (ETIEGVFSPA…PALHYRFNAP (113 aa)) are spacer. 2 N-linked (GlcNAc...) asparagine glycosylation sites follow: Asn740 and Asn795. 4 TSP type-1 domains span residues 825–885 (PPYS…EPCP), 888–943 (WVVG…QGPM), 944–1003 (CPPE…RRCP), and 1004–1058 (PARW…AKCD). 3 disulfide bridges follow: Cys837-Cys879, Cys841-Cys884, and Cys852-Cys866. An N-linked (GlcNAc...) asparagine glycan is attached at Asn892. In terms of domain architecture, PLAC spans 1066 to 1104 (GPEECKDVNKVAYCPLVLKFQFCSRAYFRQMCCKTCQGR).

As to quaternary structure, interacts with FBN1; this interaction promotes microfibrils assembly. It depends on Zn(2+) as a cofactor. In terms of processing, glycosylated. Can be O-fucosylated by POFUT2 on a serine or a threonine residue found within the consensus sequence C1-X(2)-(S/T)-C2-G of the TSP type-1 repeat domains where C1 and C2 are the first and second cysteine residue of the repeat, respectively. Fucosylated repeats can then be further glycosylated by the addition of a beta-1,3-glucose residue by the glucosyltransferase, B3GALTL. Fucosylation mediates the efficient secretion of ADAMTS family members. Can also be C-glycosylated with one or two mannose molecules on tryptophan residues within the consensus sequence W-X-X-W of the TPRs, and N-glycosylated. These other glycosylations can also facilitate secretion. In terms of tissue distribution, widely expressed in adult tissues.

It is found in the secreted. The protein resides in the extracellular space. Its subcellular location is the extracellular matrix. Metalloprotease that participate in microfibrils assembly. Microfibrils are extracellular matrix components occurring independently or along with elastin in the formation of elastic tissues. This Mus musculus (Mouse) protein is A disintegrin and metalloproteinase with thrombospondin motifs 10 (Adamts10).